The following is a 130-amino-acid chain: Large ribosomal subunit protein bL20c (130 aa).

It belongs to the bacterial ribosomal protein bL20 family.

The protein resides in the plastid. Its subcellular location is the chloroplast. Binds directly to 23S ribosomal RNA and is necessary for the in vitro assembly process of the 50S ribosomal subunit. It is not involved in the protein synthesizing functions of that subunit. This is Large ribosomal subunit protein bL20c (rpl20) from Glycine max (Soybean).